A 313-amino-acid polypeptide reads, in one-letter code: Ribonuclease HIII (313 aa).

The disordered stretch occupies residues 63 to 85 (ARWGTAEPQEKKKTAKKPADPRY). The span at 70–82 (PQEKKKTAKKPAD) shows a compositional bias: basic and acidic residues. An RNase H type-2 domain is found at 94–310 (MSVIGSDEVG…TQKAQRLADK (217 aa)). Asp100, Glu101, and Asp205 together coordinate a divalent metal cation.

Belongs to the RNase HII family. RnhC subfamily. As to quaternary structure, interacts with the RNA polymerase core. The cofactor is Mn(2+). Mg(2+) serves as cofactor.

It localises to the cytoplasm. The catalysed reaction is Endonucleolytic cleavage to 5'-phosphomonoester.. Endonuclease that specifically degrades the RNA of RNA-DNA hybrids. The sequence is that of Ribonuclease HIII (rnhC) from Bacillus subtilis (strain 168).